A 268-amino-acid chain; its full sequence is Ribosomal RNA small subunit methyltransferase A (268 aa).

Positions 16, 18, 43, 64, 89, and 110 each coordinate S-adenosyl-L-methionine.

The protein belongs to the class I-like SAM-binding methyltransferase superfamily. rRNA adenine N(6)-methyltransferase family. RsmA subfamily.

Its subcellular location is the cytoplasm. The enzyme catalyses adenosine(1518)/adenosine(1519) in 16S rRNA + 4 S-adenosyl-L-methionine = N(6)-dimethyladenosine(1518)/N(6)-dimethyladenosine(1519) in 16S rRNA + 4 S-adenosyl-L-homocysteine + 4 H(+). Its function is as follows. Specifically dimethylates two adjacent adenosines (A1518 and A1519) in the loop of a conserved hairpin near the 3'-end of 16S rRNA in the 30S particle. May play a critical role in biogenesis of 30S subunits. The chain is Ribosomal RNA small subunit methyltransferase A from Pseudomonas syringae pv. tomato (strain ATCC BAA-871 / DC3000).